The chain runs to 622 residues: Chaperone protein HscA homolog (622 aa).

Belongs to the heat shock protein 70 family.

In terms of biological role, chaperone involved in the maturation of iron-sulfur cluster-containing proteins. Has a low intrinsic ATPase activity which is markedly stimulated by HscB. This chain is Chaperone protein HscA homolog, found in Burkholderia ambifaria (strain MC40-6).